Here is a 749-residue protein sequence, read N- to C-terminus: Probable serine/threonine-protein kinase fhkD (749 aa).

Residues 47 to 150 enclose the FHA domain; it reads IFFGRNPKRC…NGTFVKGCIL (104 aa). Residues 84 to 126 show a composition bias toward low complexity; it reads NNNNNDGDNNNNNNNNNNNNNNNNNNNNNNNNNNNNNNNNNNN. The tract at residues 84 to 130 is disordered; the sequence is NNNNNDGDNNNNNNNNNNNNNNNNNNNNNNNNNNNNNNNNNNNTTKN. Residues 199-472 enclose the Protein kinase domain; sequence YSIQGILGTG…TKGALSHDWF (274 aa). ATP-binding positions include 205 to 213 and Lys-228; that span reads LGTGNFSVV. Asp-323 acts as the Proton acceptor in catalysis. Disordered regions lie at residues 512 to 620 and 640 to 749; these read NIPM…PAII and CTPT…LKGS. Residues 516–561 show a composition bias toward low complexity; it reads TLNSTTTNTTSPNNNNNNNNNNNNKNNNKNIIKSLNSNSNNYNNNS. Over residues 562–572 the composition is skewed to polar residues; the sequence is VLKKTSQSPKT. 2 stretches are compositionally biased toward low complexity: residues 590–611 and 651–667; these read NNNNNNNNNNNNNNNNNNNNNN and TNSTTTSTATSMPTSNS. The segment covering 668 to 687 has biased composition (polar residues); the sequence is VTMGTSSTSIPVSNSITMKS. Over residues 696-707 the composition is skewed to basic and acidic residues; it reads DGDKKRKEKESS. A compositionally biased stretch (low complexity) spans 708 to 739; sequence SSENVNDVIVINSNNHNNNNNNNHNINNGISS.

It belongs to the protein kinase superfamily. CAMK Ser/Thr protein kinase family. CHK2 subfamily.

It catalyses the reaction L-seryl-[protein] + ATP = O-phospho-L-seryl-[protein] + ADP + H(+). It carries out the reaction L-threonyl-[protein] + ATP = O-phospho-L-threonyl-[protein] + ADP + H(+). The polypeptide is Probable serine/threonine-protein kinase fhkD (fhkD) (Dictyostelium discoideum (Social amoeba)).